We begin with the raw amino-acid sequence, 156 residues long: Small ribosomal subunit protein uS7 (156 aa).

The protein belongs to the universal ribosomal protein uS7 family. In terms of assembly, part of the 30S ribosomal subunit. Contacts proteins S9 and S11.

In terms of biological role, one of the primary rRNA binding proteins, it binds directly to 16S rRNA where it nucleates assembly of the head domain of the 30S subunit. Is located at the subunit interface close to the decoding center, probably blocks exit of the E-site tRNA. This Bacillus cytotoxicus (strain DSM 22905 / CIP 110041 / 391-98 / NVH 391-98) protein is Small ribosomal subunit protein uS7.